A 174-amino-acid polypeptide reads, in one-letter code: Ribosome maturation factor RimM (174 aa).

The PRC barrel domain maps to 96–170 (PDEFYDHELE…YVVIDPPEGL (75 aa)).

Belongs to the RimM family. In terms of assembly, binds ribosomal protein uS19.

It localises to the cytoplasm. In terms of biological role, an accessory protein needed during the final step in the assembly of 30S ribosomal subunit, possibly for assembly of the head region. Essential for efficient processing of 16S rRNA. May be needed both before and after RbfA during the maturation of 16S rRNA. It has affinity for free ribosomal 30S subunits but not for 70S ribosomes. In Nocardia farcinica (strain IFM 10152), this protein is Ribosome maturation factor RimM.